The chain runs to 644 residues: Exoribonuclease 2 (644 aa).

Residues 189 to 516 (REDLTALDFV…NHRLLKAVIK (328 aa)) form the RNB domain. In terms of domain architecture, S1 motif spans 561 to 643 (DTRFAAEIVD…ETRSIIARPV (83 aa)).

It belongs to the RNR ribonuclease family. RNase II subfamily.

The protein localises to the cytoplasm. It catalyses the reaction Exonucleolytic cleavage in the 3'- to 5'-direction to yield nucleoside 5'-phosphates.. Functionally, involved in mRNA degradation. Hydrolyzes single-stranded polyribonucleotides processively in the 3' to 5' direction. The sequence is that of Exoribonuclease 2 from Shigella boydii serotype 18 (strain CDC 3083-94 / BS512).